A 175-amino-acid chain; its full sequence is Adenine phosphoribosyltransferase (175 aa).

The protein belongs to the purine/pyrimidine phosphoribosyltransferase family. In terms of assembly, homodimer.

The protein resides in the cytoplasm. The enzyme catalyses AMP + diphosphate = 5-phospho-alpha-D-ribose 1-diphosphate + adenine. It participates in purine metabolism; AMP biosynthesis via salvage pathway; AMP from adenine: step 1/1. In terms of biological role, catalyzes a salvage reaction resulting in the formation of AMP, that is energically less costly than de novo synthesis. This is Adenine phosphoribosyltransferase from Clavibacter michiganensis subsp. michiganensis (strain NCPPB 382).